An 81-amino-acid polypeptide reads, in one-letter code: Small ribosomal subunit protein bS18 (81 aa).

Belongs to the bacterial ribosomal protein bS18 family. As to quaternary structure, part of the 30S ribosomal subunit. Forms a tight heterodimer with protein bS6.

In terms of biological role, binds as a heterodimer with protein bS6 to the central domain of the 16S rRNA, where it helps stabilize the platform of the 30S subunit. The sequence is that of Small ribosomal subunit protein bS18 from Chlamydia trachomatis serovar L2 (strain ATCC VR-902B / DSM 19102 / 434/Bu).